The sequence spans 430 residues: Tol-Pal system protein TolB (430 aa).

Positions 1–21 are cleaved as a signal peptide; the sequence is MKQALRVAFGFLMLWAAVLHA.

It belongs to the TolB family. The Tol-Pal system is composed of five core proteins: the inner membrane proteins TolA, TolQ and TolR, the periplasmic protein TolB and the outer membrane protein Pal. They form a network linking the inner and outer membranes and the peptidoglycan layer.

The protein localises to the periplasm. Functionally, part of the Tol-Pal system, which plays a role in outer membrane invagination during cell division and is important for maintaining outer membrane integrity. TolB occupies a key intermediary position in the Tol-Pal system because it communicates directly with both membrane-embedded components, Pal in the outer membrane and TolA in the inner membrane. This chain is Tol-Pal system protein TolB, found in Salmonella typhi.